The primary structure comprises 436 residues: Adenine nucleotide transporter BT1, chloroplastic/amyloplastic/mitochondrial (436 aa).

Positions 83–135 are disordered; sequence ASLAPPFPGSRPPGRRGRGSEEEEAEGRRHEEAAAAGRSEPEEGQGQDRQPAP. Solcar repeat units lie at residues 132 to 216, 227 to 311, and 324 to 412; these read QPAP…AKKF, IPIP…LKRL, and VGPV…CKKI. The next 6 helical transmembrane spans lie at 137–158, 193–213, 229–247, 290–310, 327–347, and 384–405; these read RLVS…LETI, AVNV…YDTA, IPTP…TLCT, SLIG…TLKR, VATL…TFPL, and LYRG…AFMC. Acidic residues predominate over residues 417 to 428; the sequence is EDEEEEDEAGGG. Residues 417–436 are disordered; the sequence is EDEEEEDEAGGGEDDKKKVE.

It belongs to the mitochondrial carrier (TC 2.A.29) family. Highly expressed in silks and endosperm of developing kernels. Expressed at intermediate levels in tassels and lower levels in stems and leaves.

Its subcellular location is the plastid. It localises to the chloroplast inner membrane. The protein localises to the amyloplast inner membrane. It is found in the mitochondrion inner membrane. With respect to regulation, inhibited by mersalyl. In terms of biological role, probable adenylate translocator that mediates transport of ADP-glucose into endosperm storage plastids during starch synthesis. Transports cytosolic ADP-glucose to amyloplast stroma by counter-exchange with ADP. The chain is Adenine nucleotide transporter BT1, chloroplastic/amyloplastic/mitochondrial (BT1) from Zea mays (Maize).